The primary structure comprises 332 residues: RNA polymerase sigma-B factor (332 aa).

The short motif at 125-138 (DLIQEGALGLERGV) is the Polymerase core binding element. The segment at residues 294 to 313 (LVQISQRMGISRERVRQVEK) is a DNA-binding region (H-T-H motif).

Belongs to the sigma-70 factor family.

Functionally, sigma factors are initiation factors that promote the attachment of RNA polymerase to specific initiation sites and are then released. This is RNA polymerase sigma-B factor (sigB) from Nostoc sp. (strain PCC 7120 / SAG 25.82 / UTEX 2576).